The sequence spans 95 residues: Aspartyl/glutamyl-tRNA(Asn/Gln) amidotransferase subunit C (95 aa).

The protein belongs to the GatC family. Heterotrimer of A, B and C subunits.

The catalysed reaction is L-glutamyl-tRNA(Gln) + L-glutamine + ATP + H2O = L-glutaminyl-tRNA(Gln) + L-glutamate + ADP + phosphate + H(+). The enzyme catalyses L-aspartyl-tRNA(Asn) + L-glutamine + ATP + H2O = L-asparaginyl-tRNA(Asn) + L-glutamate + ADP + phosphate + 2 H(+). Allows the formation of correctly charged Asn-tRNA(Asn) or Gln-tRNA(Gln) through the transamidation of misacylated Asp-tRNA(Asn) or Glu-tRNA(Gln) in organisms which lack either or both of asparaginyl-tRNA or glutaminyl-tRNA synthetases. The reaction takes place in the presence of glutamine and ATP through an activated phospho-Asp-tRNA(Asn) or phospho-Glu-tRNA(Gln). The protein is Aspartyl/glutamyl-tRNA(Asn/Gln) amidotransferase subunit C of Pseudomonas putida (strain W619).